A 561-amino-acid polypeptide reads, in one-letter code: Urocanate hydratase (561 aa).

Residues 52-53 (GG), Gln-130, 176-178 (GMG), Glu-196, Arg-201, 242-243 (NA), 263-267 (QTSAH), 273-274 (YL), and Tyr-322 contribute to the NAD(+) site. Cys-410 is a catalytic residue. Gly-492 is a binding site for NAD(+).

This sequence belongs to the urocanase family. The cofactor is NAD(+).

Its subcellular location is the cytoplasm. It catalyses the reaction 4-imidazolone-5-propanoate = trans-urocanate + H2O. The protein operates within amino-acid degradation; L-histidine degradation into L-glutamate; N-formimidoyl-L-glutamate from L-histidine: step 2/3. Catalyzes the conversion of urocanate to 4-imidazolone-5-propionate. The sequence is that of Urocanate hydratase from Salmonella gallinarum (strain 287/91 / NCTC 13346).